The chain runs to 549 residues: Protein EPD1 (549 aa).

The N-terminal stretch at 1–22 (MLLNSLFPSILAAATFVTSAAA) is a signal peptide. N-linked (GlcNAc...) asparagine glycosylation is found at N40 and N59. Residues C72 and C101 are joined by a disulfide bond. Residues N147 and N163 are each glycosylated (N-linked (GlcNAc...) asparagine). Intrachain disulfides connect C214-C347, C232-C263, C369-C420, C378-C444, and C397-C402. The segment covering 336 to 356 (AESASGVSRTSCPTNTDNWEA) has biased composition (polar residues). Positions 336–361 (AESASGVSRTSCPTNTDNWEASTELP) are disordered. N383 carries an N-linked (GlcNAc...) asparagine glycan. N-linked (GlcNAc...) asparagine glycosylation is found at N408 and N438. The segment at 479–519 (SVRTDTSEATTDSGSGSSNSGSASSSKSTSSSTSSGSSGSK) is disordered. Over residues 487–519 (ATTDSGSGSSNSGSASSSKSTSSSTSSGSSGSK) the composition is skewed to low complexity.

Belongs to the glycosyl hydrolase 72 family.

The protein localises to the cell membrane. In Candida maltosa (Yeast), this protein is Protein EPD1 (EPD1).